Here is a 358-residue protein sequence, read N- to C-terminus: MKAIIVRPPNEGVEVKDITLRESTDGKIVVRTRLSGLCGTDRGLVTGRLTFARPPPGYDFLILGHETLGEVVKGNGEFSPGDLVVPVVRRGCGSCLNCMLGRQDFCETGRFTEIGIRGAHGTMREEFLEDPKYLVRVPRELGDEGVLLEPLSNVVKALTEMEYLQRRSWWRCDDSTYSCRTAVVLGSGPIGLLFSMALRSMGFRVIVANRRPPSQVESEITRDIGATFLNTSEHEDLEPDLIVDTSGHPSAVVPLLPRIRKNGAVILFGTTGLERYELTAEEITMLVENNILIFGSVNASKADFQAGVNLLVEWKARYPGVLQRMITKRVSVEEAPQVLKEKVPGEIKTVIDWTARES.

C38 lines the Zn(2+) pocket. T40 lines the substrate pocket. Residues H65, E66, C92, C95, C98, and C106 each coordinate Zn(2+). Residues E113, E149, and N153 each coordinate substrate. Residue E149 participates in Zn(2+) binding. Residues 187–190 (SGPI), 209–211 (NRR), 268–270 (FGT), 296–298 (SVN), and K342 contribute to the NADP(+) site. N298 serves as a coordination point for substrate.

This sequence belongs to the zinc-containing alcohol dehydrogenase family. Glucose 1-dehydrogenase subfamily. Zn(2+) is required as a cofactor.

The catalysed reaction is D-glucose + NAD(+) = D-glucono-1,5-lactone + NADH + H(+). It catalyses the reaction D-glucose + NADP(+) = D-glucono-1,5-lactone + NADPH + H(+). Catalyzes the NAD(P)(+)-dependent oxidation of D-glucose to D-gluconate via gluconolactone. Can utilize both NAD(+) and NADP(+) as electron acceptor. Is involved in the degradation of glucose through a non-phosphorylative variant of the Entner-Doudoroff pathway. This is Glucose 1-dehydrogenase from Metallosphaera sedula (strain ATCC 51363 / DSM 5348 / JCM 9185 / NBRC 15509 / TH2).